The chain runs to 141 residues: Large ribosomal subunit protein uL16 (141 aa).

The protein belongs to the universal ribosomal protein uL16 family. As to quaternary structure, part of the 50S ribosomal subunit.

Binds 23S rRNA and is also seen to make contacts with the A and possibly P site tRNAs. The protein is Large ribosomal subunit protein uL16 of Deinococcus geothermalis (strain DSM 11300 / CIP 105573 / AG-3a).